Consider the following 646-residue polypeptide: Beta-galactosidase-1-like protein (646 aa).

An N-terminal signal peptide occupies residues 1 to 23 (MPPDLPSLLLRLVVLLLLSQAEA). Residue N93 is glycosylated (N-linked (GlcNAc...) asparagine). E182 functions as the Proton donor in the catalytic mechanism. N-linked (GlcNAc...) asparagine glycosylation occurs at N239. The active-site Nucleophile is E260.

It belongs to the glycosyl hydrolase 35 family.

It is found in the secreted. Probable glycosyl hydrolase. The chain is Beta-galactosidase-1-like protein (Glb1l) from Mus musculus (Mouse).